Here is a 434-residue protein sequence, read N- to C-terminus: Beta-enolase (434 aa).

Ser2 is subject to N-acetylserine. The substrate site is built by His158 and Glu167. Residue Glu210 is the Proton donor of the active site. Residues Asp245, Glu293, and Asp318 each contribute to the Mg(2+) site. 2 residues coordinate substrate: Glu293 and Asp318. Lys343 acts as the Proton acceptor in catalysis. Substrate-binding positions include 370-373 and Lys394; that span reads SHRS.

The protein belongs to the enolase family. Homodimer. Interacts with PNKD. Mg(2+) serves as cofactor.

It localises to the cytoplasm. The catalysed reaction is (2R)-2-phosphoglycerate = phosphoenolpyruvate + H2O. It participates in carbohydrate degradation; glycolysis; pyruvate from D-glyceraldehyde 3-phosphate: step 4/5. Glycolytic enzyme that catalyzes the conversion of 2-phosphoglycerate to phosphoenolpyruvate. The sequence is that of Beta-enolase (ENO3) from Gallus gallus (Chicken).